The sequence spans 552 residues: Urocanate hydratase (552 aa).

NAD(+) is bound by residues 49–50 (GG), Q127, 173–175 (GMG), D193, 239–240 (NA), 260–264 (QTSAH), 270–271 (YI), and Y319. Residue C407 is part of the active site. G489 is an NAD(+) binding site.

It belongs to the urocanase family. NAD(+) is required as a cofactor.

The protein localises to the cytoplasm. It carries out the reaction 4-imidazolone-5-propanoate = trans-urocanate + H2O. Its pathway is amino-acid degradation; L-histidine degradation into L-glutamate; N-formimidoyl-L-glutamate from L-histidine: step 2/3. In terms of biological role, catalyzes the conversion of urocanate to 4-imidazolone-5-propionate. The sequence is that of Urocanate hydratase from Bacillus cereus (strain AH820).